A 353-amino-acid polypeptide reads, in one-letter code: UPF0283 membrane protein YcjF (353 aa).

Residues 1-19 (MSEPLKPRIDFAEPLKEEP) are compositionally biased toward basic and acidic residues. A disordered region spans residues 1-35 (MSEPLKPRIDFAEPLKEEPTSAFKAQQTFSEAESR). 3 helical membrane passes run 70–90 (MVMG…VQWT), 100–120 (VALG…GSVV), and 213–233 (ESTL…FIAW).

It belongs to the UPF0283 family.

Its subcellular location is the cell inner membrane. The chain is UPF0283 membrane protein YcjF from Salmonella paratyphi B (strain ATCC BAA-1250 / SPB7).